The chain runs to 131 residues: uncharacterized protein (131 aa).

The region spanning 26 to 124 is the HTH hxlR-type domain; that stretch reads CSVEVAVNEI…WGKMYGSHQE (99 aa).

This is an uncharacterized protein from Methanothermobacter thermautotrophicus (strain ATCC 29096 / DSM 1053 / JCM 10044 / NBRC 100330 / Delta H) (Methanobacterium thermoautotrophicum).